Here is a 57-residue protein sequence, read N- to C-terminus: DNA-directed RNA polymerase subunit Rpo6 (57 aa).

The protein belongs to the archaeal Rpo6/eukaryotic RPB6 RNA polymerase subunit family. Part of the RNA polymerase complex.

Its subcellular location is the cytoplasm. The enzyme catalyses RNA(n) + a ribonucleoside 5'-triphosphate = RNA(n+1) + diphosphate. DNA-dependent RNA polymerase (RNAP) catalyzes the transcription of DNA into RNA using the four ribonucleoside triphosphates as substrates. This chain is DNA-directed RNA polymerase subunit Rpo6, found in Pyrococcus abyssi (strain GE5 / Orsay).